Consider the following 279-residue polypeptide: NADPH-dependent 7-cyano-7-deazaguanine reductase (279 aa).

Substrate is bound at residue 86-88 (IES). 88–89 (SK) lines the NADPH pocket. Cys-187 acts as the Thioimide intermediate in catalysis. Asp-194 (proton donor) is an active-site residue. 226–227 (HE) is a substrate binding site. 255–256 (RG) serves as a coordination point for NADPH.

It belongs to the GTP cyclohydrolase I family. QueF type 2 subfamily. In terms of assembly, homodimer.

It localises to the cytoplasm. It catalyses the reaction 7-aminomethyl-7-carbaguanine + 2 NADP(+) = 7-cyano-7-deazaguanine + 2 NADPH + 3 H(+). It participates in tRNA modification; tRNA-queuosine biosynthesis. Its function is as follows. Catalyzes the NADPH-dependent reduction of 7-cyano-7-deazaguanine (preQ0) to 7-aminomethyl-7-deazaguanine (preQ1). The sequence is that of NADPH-dependent 7-cyano-7-deazaguanine reductase from Haemophilus influenzae (strain ATCC 51907 / DSM 11121 / KW20 / Rd).